The chain runs to 326 residues: D-alanine--D-alanine ligase (326 aa).

The region spanning Lys-114–Ser-313 is the ATP-grasp domain. Pro-140 to Thr-195 contributes to the ATP binding site. Residues Asp-267, Glu-280, and Asn-282 each contribute to the Mg(2+) site.

Belongs to the D-alanine--D-alanine ligase family. The cofactor is Mg(2+). It depends on Mn(2+) as a cofactor.

The protein resides in the cytoplasm. The enzyme catalyses 2 D-alanine + ATP = D-alanyl-D-alanine + ADP + phosphate + H(+). It functions in the pathway cell wall biogenesis; peptidoglycan biosynthesis. In terms of biological role, cell wall formation. The protein is D-alanine--D-alanine ligase of Bordetella petrii (strain ATCC BAA-461 / DSM 12804 / CCUG 43448).